The primary structure comprises 229 residues: Potassium/proton antiporter CemA (229 aa).

Helical transmembrane passes span 7 to 27 (FIPF…YLSF), 106 to 126 (MILH…YSIL), 154 to 174 (ILLV…ELLI), and 189 to 209 (IISS…KYWI).

This sequence belongs to the CemA family.

Its subcellular location is the plastid. The protein localises to the chloroplast inner membrane. The catalysed reaction is K(+)(in) + H(+)(out) = K(+)(out) + H(+)(in). Its function is as follows. Contributes to K(+)/H(+) antiport activity by supporting proton efflux to control proton extrusion and homeostasis in chloroplasts in a light-dependent manner to modulate photosynthesis. Prevents excessive induction of non-photochemical quenching (NPQ) under continuous-light conditions. Indirectly promotes efficient inorganic carbon uptake into chloroplasts. The protein is Potassium/proton antiporter CemA of Spinacia oleracea (Spinach).